A 687-amino-acid chain; its full sequence is Immune inhibitor A (687 aa).

Residues 1 to 12 (MKDAKADTKEKL) are compositionally biased toward basic and acidic residues. The segment at residues 1 to 25 (MKDAKADTKEKLNQPATGTPAATGP) is a signal peptide (or 32). The segment at 1-43 (MKDAKADTKEKLNQPATGTPAATGPVKGGLNGKVPTSPAKQKA) is disordered. A propeptide spanning residues 26-40 (VKGGLNGKVPTSPAK) is cleaved from the precursor. A Zn(2+)-binding site is contributed by His-266. Glu-267 is a catalytic residue. His-270 is a binding site for Zn(2+).

Belongs to the peptidase M6 family. It depends on Zn(2+) as a cofactor. Requires Ca(2+) as cofactor.

Its subcellular location is the secreted. Neutral metalloprotease that is secreted to degrade antibacterial proteins produced by the insect host for its defense (attacins and cecropins). Probably degrades some unknown crucial protein(s) too, since it is toxic when injected to insect larvae. The protein is Immune inhibitor A (ina) of Bacillus thuringiensis subsp. alesti.